The sequence spans 354 residues: MSFINSWLRSDIKMINAYHVPISADMVKMDAMESPFSLSDELTDQYLTYLVDAQLNRYPSPSSDKLNQTLRLLMNIPKEFGVLLGNGSDELIQLLALACNTGDTVLSVEPSFVMYGMITKFTRLNYQSVLLTDDFEIDDDTMQKAIKTYNPKLIFIAYPNNPTGNMFNREIIEHIISSTKAMVVLDEAYYAYTTDSFLTDIAKYPNLVLLRTVSKIGFAGLRLGLLIATQDTVNQLNKLRLPYNINILTQVSANFLLQEKNTINANVSVILAQRQVLFDALVKINVLKVYPSQANFILFKAPNTNILFDFLKENGVLIKNLSVKKKLINCLRVTIGTEEQNQKFINIVEKFYIL.

The residue at position 215 (Lys-215) is an N6-(pyridoxal phosphate)lysine.

This sequence belongs to the class-II pyridoxal-phosphate-dependent aminotransferase family. Histidinol-phosphate aminotransferase subfamily. In terms of assembly, homodimer. The cofactor is pyridoxal 5'-phosphate.

The catalysed reaction is L-histidinol phosphate + 2-oxoglutarate = 3-(imidazol-4-yl)-2-oxopropyl phosphate + L-glutamate. It functions in the pathway amino-acid biosynthesis; L-histidine biosynthesis; L-histidine from 5-phospho-alpha-D-ribose 1-diphosphate: step 7/9. The chain is Histidinol-phosphate aminotransferase from Vesicomyosocius okutanii subsp. Calyptogena okutanii (strain HA).